The sequence spans 277 residues: Glutamate racemase (277 aa).

Substrate-binding positions include 13-14 (DS) and 45-46 (YG). Residue C77 is the Proton donor/acceptor of the active site. 78–79 (NT) lines the substrate pocket. C192 (proton donor/acceptor) is an active-site residue. Residue 193–194 (TH) coordinates substrate.

It belongs to the aspartate/glutamate racemases family.

The enzyme catalyses L-glutamate = D-glutamate. The protein operates within cell wall biogenesis; peptidoglycan biosynthesis. Provides the (R)-glutamate required for cell wall biosynthesis. The chain is Glutamate racemase from Rhizobium meliloti (strain 1021) (Ensifer meliloti).